The chain runs to 350 residues: N-acetyllactosaminide beta-1,3-N-acetylglucosaminyltransferase 4 (350 aa).

Topologically, residues 1-4 (MLPR) are cytoplasmic. Residues 5 to 25 (LGCVLFCSLVVLLLSCLLLLK) form a helical; Signal-anchor for type II membrane protein membrane-spanning segment. Residues 26 to 350 (ERIPAGSSKA…RLKCAATHKP (325 aa)) are Lumenal-facing. Asn-53 and Asn-166 each carry an N-linked (GlcNAc...) asparagine glycan.

The protein belongs to the glycosyltransferase 31 family.

It is found in the golgi apparatus membrane. The enzyme catalyses a beta-D-galactosyl-(1-&gt;4)-N-acetyl-beta-D-glucosaminyl derivative + UDP-N-acetyl-alpha-D-glucosamine = an N-acetyl-beta-D-glucosaminyl-(1-&gt;3)-beta-D-galactosyl-(1-&gt;4)-N-acetyl-beta-D-glucosaminyl derivative + UDP + H(+). It participates in protein modification; protein glycosylation. Functionally, beta-1,3-N-acetylglucosaminyltransferase involved in the synthesis of poly-N-acetyllactosamine. Has activity for type 2 oligosaccharides. The sequence is that of N-acetyllactosaminide beta-1,3-N-acetylglucosaminyltransferase 4 (B3gnt4) from Mus musculus (Mouse).